Reading from the N-terminus, the 161-residue chain is Probable ribosome biogenesis protein RLP24 (161 aa).

The protein belongs to the eukaryotic ribosomal protein eL24 family. In terms of assembly, associated with nucleolar and cytoplasmic pre-60S particles. At the end of biogenesis it dissociates from cytoplasmic pre-60S particles and is likely to be exchanged for its ribosomal homolog, RPL24.

It localises to the nucleus. The protein resides in the nucleolus. Its function is as follows. Involved in the biogenesis of the 60S ribosomal subunit. Ensures the docking of GTPBP4/NOG1 to pre-60S particles. The protein is Probable ribosome biogenesis protein RLP24 (rsl24d1) of Danio rerio (Zebrafish).